Here is a 112-residue protein sequence, read N- to C-terminus: Large ribosomal subunit protein uL22 (112 aa).

It belongs to the universal ribosomal protein uL22 family. In terms of assembly, part of the 50S ribosomal subunit.

Functionally, this protein binds specifically to 23S rRNA; its binding is stimulated by other ribosomal proteins, e.g. L4, L17, and L20. It is important during the early stages of 50S assembly. It makes multiple contacts with different domains of the 23S rRNA in the assembled 50S subunit and ribosome. The globular domain of the protein is located near the polypeptide exit tunnel on the outside of the subunit, while an extended beta-hairpin is found that lines the wall of the exit tunnel in the center of the 70S ribosome. This chain is Large ribosomal subunit protein uL22, found in Akkermansia muciniphila (strain ATCC BAA-835 / DSM 22959 / JCM 33894 / BCRC 81048 / CCUG 64013 / CIP 107961 / Muc).